A 719-amino-acid chain; its full sequence is Glycine--tRNA ligase beta subunit (719 aa).

The disordered stretch occupies residues 65–84; that stretch reads PDREEEIKGPPAKAAFKDGK.

It belongs to the class-II aminoacyl-tRNA synthetase family. Tetramer of two alpha and two beta subunits.

The protein resides in the cytoplasm. The catalysed reaction is tRNA(Gly) + glycine + ATP = glycyl-tRNA(Gly) + AMP + diphosphate. This is Glycine--tRNA ligase beta subunit from Trichodesmium erythraeum (strain IMS101).